We begin with the raw amino-acid sequence, 126 residues long: Histone H2B type 1-B (126 aa).

Low complexity predominate over residues 1-12; it reads MPEPSKSAPAPK. Residues 1–36 are disordered; that stretch reads MPEPSKSAPAPKKGSKKAISKAQKKDGKKRKRSRKE. Proline 2 bears the N-acetylproline mark. Glutamate 3 bears the ADP-ribosyl glutamic acid mark. Position 6 is an N6-(2-hydroxyisobutyryl)lysine; alternate (lysine 6). Lysine 6 bears the N6-(beta-hydroxybutyryl)lysine; alternate mark. At lysine 6 the chain carries N6-acetyllysine; alternate. Lysine 6 is modified (N6-butyryllysine; alternate). Lysine 6 is modified (N6-crotonyllysine; alternate). Position 6 is an N6-lactoyllysine; alternate (lysine 6). Lysine 6 is covalently cross-linked (Glycyl lysine isopeptide (Lys-Gly) (interchain with G-Cter in SUMO2); alternate). ADP-ribosylserine is present on serine 7. An N6-(beta-hydroxybutyryl)lysine; alternate modification is found at lysine 12. Lysine 12 and lysine 13 each carry N6-acetyllysine; alternate. N6-crotonyllysine; alternate occurs at positions 12 and 13. Residue lysine 12 is modified to N6-lactoyllysine; alternate. Lysine 13 bears the N6-(2-hydroxyisobutyryl)lysine; alternate mark. Serine 15 is subject to Phosphoserine; by STK4/MST1. N6-acetyllysine; alternate occurs at positions 16, 17, 21, and 24. 4 positions are modified to N6-crotonyllysine; alternate: lysine 16, lysine 17, lysine 21, and lysine 24. 4 positions are modified to N6-lactoyllysine; alternate: lysine 16, lysine 17, lysine 21, and lysine 24. Position 17 is an N6-glutaryllysine; alternate (lysine 17). N6-(2-hydroxyisobutyryl)lysine; alternate occurs at positions 21 and 24. Lysine 21 carries the N6-(beta-hydroxybutyryl)lysine; alternate modification. An N6-butyryllysine; alternate modification is found at lysine 21. Residue lysine 21 forms a Glycyl lysine isopeptide (Lys-Gly) (interchain with G-Cter in SUMO2); alternate linkage. Position 25 is an N6-(2-hydroxyisobutyryl)lysine (lysine 25). Lysine 35 bears the N6-(2-hydroxyisobutyryl)lysine; alternate mark. N6-(beta-hydroxybutyryl)lysine; alternate is present on lysine 35. Lysine 35 is subject to N6-crotonyllysine; alternate. An N6-glutaryllysine; alternate modification is found at lysine 35. Residue lysine 35 is modified to N6-succinyllysine; alternate. A Glycyl lysine isopeptide (Lys-Gly) (interchain with G-Cter in ubiquitin); alternate cross-link involves residue lysine 35. PolyADP-ribosyl glutamic acid is present on glutamate 36. At serine 37 the chain carries Phosphoserine; by AMPK. N6-(2-hydroxyisobutyryl)lysine; alternate occurs at positions 44, 47, and 58. The residue at position 44 (lysine 44) is an N6-lactoyllysine; alternate. N6-glutaryllysine; alternate is present on residues lysine 44 and lysine 47. Lysine 47 carries the N6-methyllysine; alternate modification. Lysine 58 is modified (N6,N6-dimethyllysine; alternate). Arginine 80 is subject to Dimethylated arginine. An N6-(2-hydroxyisobutyryl)lysine; alternate modification is found at lysine 86. Lysine 86 carries the N6-acetyllysine; alternate modification. The residue at position 86 (lysine 86) is an N6-lactoyllysine; alternate. N6,N6,N6-trimethyllysine; alternate is present on lysine 86. Residues arginine 87 and arginine 93 each carry the omega-N-methylarginine modification. Residue lysine 109 is modified to N6-(2-hydroxyisobutyryl)lysine; alternate. Lysine 109 is modified (N6-(beta-hydroxybutyryl)lysine; alternate). The residue at position 109 (lysine 109) is an N6-lactoyllysine; alternate. Residue lysine 109 is modified to N6-glutaryllysine; alternate. Residue lysine 109 is modified to N6-methyllysine; alternate. An O-linked (GlcNAc) serine glycan is attached at serine 113. Position 116 is a phosphothreonine (threonine 116). 2 positions are modified to N6-(2-hydroxyisobutyryl)lysine; alternate: lysine 117 and lysine 121. N6-(beta-hydroxybutyryl)lysine; alternate is present on lysine 117. An N6-lactoyllysine; alternate mark is found at lysine 117 and lysine 121. An N6-glutaryllysine; alternate mark is found at lysine 117 and lysine 121. An N6-succinyllysine; alternate mark is found at lysine 117 and lysine 121. At lysine 117 the chain carries N6-methylated lysine; alternate. A Glycyl lysine isopeptide (Lys-Gly) (interchain with G-Cter in ubiquitin); alternate cross-link involves residue lysine 121.

It belongs to the histone H2B family. In terms of assembly, the nucleosome is a histone octamer containing two molecules each of H2A, H2B, H3 and H4 assembled in one H3-H4 heterotetramer and two H2A-H2B heterodimers. The octamer wraps approximately 147 bp of DNA. In terms of processing, monoubiquitination at Lys-35 (H2BK34Ub) by the MSL1/MSL2 dimer is required for histone H3 'Lys-4' (H3K4me) and 'Lys-79' (H3K79me) methylation and transcription activation at specific gene loci, such as HOXA9 and MEIS1 loci. Similarly, monoubiquitination at Lys-121 (H2BK120Ub) by the RNF20/40 complex gives a specific tag for epigenetic transcriptional activation and is also prerequisite for histone H3 'Lys-4' and 'Lys-79' methylation. It also functions cooperatively with the FACT dimer to stimulate elongation by RNA polymerase II. H2BK120Ub also acts as a regulator of mRNA splicing: deubiquitination by USP49 is required for efficient cotranscriptional splicing of a large set of exons. Phosphorylated on Ser-15 (H2BS14ph) by STK4/MST1 during apoptosis; which facilitates apoptotic chromatin condensation. Also phosphorylated on Ser-15 in response to DNA double strand breaks (DSBs), and in correlation with somatic hypermutation and immunoglobulin class-switch recombination. Phosphorylation at Ser-37 (H2BS36ph) by AMPK in response to stress promotes transcription. Post-translationally, glcNAcylation at Ser-113 promotes monoubiquitination of Lys-121. It fluctuates in response to extracellular glucose, and associates with transcribed genes. In terms of processing, ADP-ribosylated by PARP1 or PARP2 on Ser-7 (H2BS6ADPr) in response to DNA damage. H2BS6ADPr promotes recruitment of CHD1L. Mono-ADP-ribosylated on Glu-3 (H2BE2ADPr) by PARP3 in response to single-strand breaks. Poly ADP-ribosylation on Glu-36 (H2BE35ADPr) by PARP1 regulates adipogenesis: it inhibits phosphorylation at Ser-37 (H2BS36ph), thereby blocking expression of pro-adipogenetic genes. Hydroxybutyrylation of histones is induced by starvation. Post-translationally, crotonylation (Kcr) is specifically present in male germ cells and marks testis-specific genes in post-meiotic cells, including X-linked genes that escape sex chromosome inactivation in haploid cells. Crotonylation marks active promoters and enhancers and confers resistance to transcriptional repressors. It is also associated with post-meiotically activated genes on autosomes. In terms of processing, lactylated in macrophages by EP300/P300 by using lactoyl-CoA directly derived from endogenous or exogenous lactate, leading to stimulates gene transcription.

It localises to the nucleus. The protein localises to the chromosome. Functionally, core component of nucleosome. Nucleosomes wrap and compact DNA into chromatin, limiting DNA accessibility to the cellular machineries which require DNA as a template. Histones thereby play a central role in transcription regulation, DNA repair, DNA replication and chromosomal stability. DNA accessibility is regulated via a complex set of post-translational modifications of histones, also called histone code, and nucleosome remodeling. The chain is Histone H2B type 1-B from Mus musculus (Mouse).